The sequence spans 585 residues: Adenine deaminase (585 aa).

The protein belongs to the metallo-dependent hydrolases superfamily. Adenine deaminase family. Requires Mn(2+) as cofactor.

The catalysed reaction is adenine + H2O + H(+) = hypoxanthine + NH4(+). This is Adenine deaminase from Halalkalibacterium halodurans (strain ATCC BAA-125 / DSM 18197 / FERM 7344 / JCM 9153 / C-125) (Bacillus halodurans).